The chain runs to 180 residues: Inosine/xanthosine triphosphatase (180 aa).

Residue 8–13 coordinates substrate; the sequence is TTNPAK. Residue Asp38 participates in Mg(2+) binding.

This sequence belongs to the YjjX NTPase family. Homodimer. Requires Mg(2+) as cofactor. Mn(2+) is required as a cofactor.

It carries out the reaction XTP + H2O = XDP + phosphate + H(+). It catalyses the reaction ITP + H2O = IDP + phosphate + H(+). Functionally, phosphatase that hydrolyzes non-canonical purine nucleotides such as XTP and ITP to their respective diphosphate derivatives. Probably excludes non-canonical purines from DNA/RNA precursor pool, thus preventing their incorporation into DNA/RNA and avoiding chromosomal lesions. The chain is Inosine/xanthosine triphosphatase from Yersinia pseudotuberculosis serotype O:1b (strain IP 31758).